The chain runs to 292 residues: Phosphatidylserine decarboxylase proenzyme (292 aa).

Active-site charge relay system; for autoendoproteolytic cleavage activity residues include D92, H149, and S255. S255 functions as the Schiff-base intermediate with substrate; via pyruvic acid; for decarboxylase activity in the catalytic mechanism. Position 255 is a pyruvic acid (Ser); by autocatalysis (S255).

This sequence belongs to the phosphatidylserine decarboxylase family. PSD-B subfamily. Prokaryotic type I sub-subfamily. Heterodimer of a large membrane-associated beta subunit and a small pyruvoyl-containing alpha subunit. Pyruvate serves as cofactor. In terms of processing, is synthesized initially as an inactive proenzyme. Formation of the active enzyme involves a self-maturation process in which the active site pyruvoyl group is generated from an internal serine residue via an autocatalytic post-translational modification. Two non-identical subunits are generated from the proenzyme in this reaction, and the pyruvate is formed at the N-terminus of the alpha chain, which is derived from the carboxyl end of the proenzyme. The autoendoproteolytic cleavage occurs by a canonical serine protease mechanism, in which the side chain hydroxyl group of the serine supplies its oxygen atom to form the C-terminus of the beta chain, while the remainder of the serine residue undergoes an oxidative deamination to produce ammonia and the pyruvoyl prosthetic group on the alpha chain. During this reaction, the Ser that is part of the protease active site of the proenzyme becomes the pyruvoyl prosthetic group, which constitutes an essential element of the active site of the mature decarboxylase.

It localises to the cell membrane. The catalysed reaction is a 1,2-diacyl-sn-glycero-3-phospho-L-serine + H(+) = a 1,2-diacyl-sn-glycero-3-phosphoethanolamine + CO2. Its pathway is phospholipid metabolism; phosphatidylethanolamine biosynthesis; phosphatidylethanolamine from CDP-diacylglycerol: step 2/2. In terms of biological role, catalyzes the formation of phosphatidylethanolamine (PtdEtn) from phosphatidylserine (PtdSer). The chain is Phosphatidylserine decarboxylase proenzyme from Idiomarina loihiensis (strain ATCC BAA-735 / DSM 15497 / L2-TR).